A 430-amino-acid chain; its full sequence is Dihydroorotase (430 aa).

Residues histidine 57 and histidine 59 each coordinate Zn(2+). Substrate-binding positions include 59-61 and asparagine 91; that span reads HLR. Aspartate 151, histidine 178, and histidine 231 together coordinate Zn(2+). Asparagine 277 lines the substrate pocket. Position 304 (aspartate 304) interacts with Zn(2+). Aspartate 304 is an active-site residue. Substrate-binding positions include histidine 308 and 322 to 323; that span reads PG.

It belongs to the metallo-dependent hydrolases superfamily. DHOase family. Class I DHOase subfamily. Zn(2+) is required as a cofactor.

The enzyme catalyses (S)-dihydroorotate + H2O = N-carbamoyl-L-aspartate + H(+). The protein operates within pyrimidine metabolism; UMP biosynthesis via de novo pathway; (S)-dihydroorotate from bicarbonate: step 3/3. Catalyzes the reversible cyclization of carbamoyl aspartate to dihydroorotate. The protein is Dihydroorotase of Mycobacterium tuberculosis (strain ATCC 25618 / H37Rv).